A 210-amino-acid chain; its full sequence is Probable nicotinate-nucleotide adenylyltransferase (210 aa).

It belongs to the NadD family.

It catalyses the reaction nicotinate beta-D-ribonucleotide + ATP + H(+) = deamido-NAD(+) + diphosphate. Its pathway is cofactor biosynthesis; NAD(+) biosynthesis; deamido-NAD(+) from nicotinate D-ribonucleotide: step 1/1. Its function is as follows. Catalyzes the reversible adenylation of nicotinate mononucleotide (NaMN) to nicotinic acid adenine dinucleotide (NaAD). This chain is Probable nicotinate-nucleotide adenylyltransferase, found in Streptococcus mutans serotype c (strain ATCC 700610 / UA159).